We begin with the raw amino-acid sequence, 529 residues long: GTPase Obg (529 aa).

An Obg domain is found at 2–159 (ASFVDRVVLH…SDIVLELKSI (158 aa)). The 184-residue stretch at 160–343 (ADIALVGFPS…LGFAMAEIVK (184 aa)) folds into the OBG-type G domain. Residues 166–173 (GFPSAGKS), 191–195 (FTTLI), 212–215 (DVPG), 295–298 (NKVD), and 324–326 (SAT) contribute to the GTP site. The Mg(2+) site is built by serine 173 and threonine 193. Residues 363–447 (PRAVNETGFR…DDGVVFDWEP (85 aa)) enclose the OCT domain. A disordered region spans residues 461 to 529 (GTDIRFADTG…ESGLDSGDES (69 aa)). Residues 462–502 (TDIRFADTGDRPTRSQKREEQQERRDAKAAARAELEAERKA) are compositionally biased toward basic and acidic residues.

The protein belongs to the TRAFAC class OBG-HflX-like GTPase superfamily. OBG GTPase family. Monomer. Mg(2+) serves as cofactor.

Its subcellular location is the cytoplasm. An essential GTPase which binds GTP, GDP and possibly (p)ppGpp with moderate affinity, with high nucleotide exchange rates and a fairly low GTP hydrolysis rate. Plays a role in control of the cell cycle, stress response, ribosome biogenesis and in those bacteria that undergo differentiation, in morphogenesis control. This chain is GTPase Obg, found in Pseudarthrobacter chlorophenolicus (strain ATCC 700700 / DSM 12829 / CIP 107037 / JCM 12360 / KCTC 9906 / NCIMB 13794 / A6) (Arthrobacter chlorophenolicus).